Here is a 752-residue protein sequence, read N- to C-terminus: uncharacterized protein (752 aa).

2 positions are modified to phosphoserine: serine 202 and serine 582. The tract at residues 596 to 752 (EEEKESVEVE…KTGEDGEIVL (157 aa)) is disordered. Composition is skewed to basic and acidic residues over residues 601 to 613 (SVEVEEGKHKNDL) and 641 to 677 (LKSEDDNTSEASKDPSSHVKSPENIEKLKQNDDHFEV). Over residues 695–718 (NNVAETILEVTSSPKSSENSQKQS) the composition is skewed to polar residues. 2 positions are modified to phosphoserine: serine 707 and serine 738.

This is an uncharacterized protein from Schizosaccharomyces pombe (strain 972 / ATCC 24843) (Fission yeast).